The chain runs to 313 residues: MSTREIRIATRKSALALWQAEYVKARLEQAHPGLLVTLVPMVSRGDKLLDAPLAKIGGKGLFVKELETALLDNEADIAVHSMKDVPMDFPEGLGLYCICEREDPRDAFVSNTFDSLEALPAGSIVGTSSLRRQAQLLARRPDLQIRFLRGNVNTRLAKLDAGEYDAIILAAAGLIRLGFEDRITSTISVDDSLPAGGQGAVGIECRSADVEIHALLAPLHHADTADRVVAERALNKHLNGGCQVPIACYAVLEGDQLWLRGLVGQPSGGTLLVADARAPRTAAETLGVQVAEDLLSQGAEAILKEVYGEAGHP.

S-(dipyrrolylmethanemethyl)cysteine is present on C242.

Belongs to the HMBS family. As to quaternary structure, monomer. Requires dipyrromethane as cofactor.

The enzyme catalyses 4 porphobilinogen + H2O = hydroxymethylbilane + 4 NH4(+). It participates in porphyrin-containing compound metabolism; protoporphyrin-IX biosynthesis; coproporphyrinogen-III from 5-aminolevulinate: step 2/4. In terms of biological role, tetrapolymerization of the monopyrrole PBG into the hydroxymethylbilane pre-uroporphyrinogen in several discrete steps. The sequence is that of Porphobilinogen deaminase from Pseudomonas putida (strain GB-1).